We begin with the raw amino-acid sequence, 1054 residues long: Carbamoyl phosphate synthase large chain (1054 aa).

The interval 1-402 (MPRRDDIRSI…SLLKAMASLE (402 aa)) is carboxyphosphate synthetic domain. Residues R129, R169, G175, G176, R208, V210, E215, G241, V242, H243, Q285, and E299 each contribute to the ATP site. Residues 133–328 (REAMERIGLR…IAKIAARLAV (196 aa)) enclose the ATP-grasp 1 domain. Mg(2+) contacts are provided by Q285, E299, and N301. Mn(2+) contacts are provided by Q285, E299, and N301. An oligomerization domain region spans residues 403 to 531 (IETRDIQARL…YYYSTYEQED (129 aa)). The interval 532–914 (EVERGENPSV…AFAKALAAAG (383 aa)) is carbamoyl phosphate synthetic domain. Residues 658-849 (GRLLRELGIP…LARLATRVLL (192 aa)) enclose the ATP-grasp 2 domain. Residues R694, K733, E740, G765, V766, H767, S768, Q808, and E820 each coordinate ATP. The Mg(2+) site is built by Q808, E820, and N822. The Mn(2+) site is built by Q808, E820, and N822. One can recognise an MGS-like domain in the interval 915 to 1054 (QRLPESGRVY…SLQDLYAART (140 aa)). The tract at residues 915–1054 (QRLPESGRVY…SLQDLYAART (140 aa)) is allosteric domain.

It belongs to the CarB family. Composed of two chains; the small (or glutamine) chain promotes the hydrolysis of glutamine to ammonia, which is used by the large (or ammonia) chain to synthesize carbamoyl phosphate. Tetramer of heterodimers (alpha,beta)4. The cofactor is Mg(2+). Mn(2+) is required as a cofactor.

It carries out the reaction hydrogencarbonate + L-glutamine + 2 ATP + H2O = carbamoyl phosphate + L-glutamate + 2 ADP + phosphate + 2 H(+). It catalyses the reaction hydrogencarbonate + NH4(+) + 2 ATP = carbamoyl phosphate + 2 ADP + phosphate + 2 H(+). It functions in the pathway amino-acid biosynthesis; L-arginine biosynthesis; carbamoyl phosphate from bicarbonate: step 1/1. It participates in pyrimidine metabolism; UMP biosynthesis via de novo pathway; (S)-dihydroorotate from bicarbonate: step 1/3. Large subunit of the glutamine-dependent carbamoyl phosphate synthetase (CPSase). CPSase catalyzes the formation of carbamoyl phosphate from the ammonia moiety of glutamine, carbonate, and phosphate donated by ATP, constituting the first step of 2 biosynthetic pathways, one leading to arginine and/or urea and the other to pyrimidine nucleotides. The large subunit (synthetase) binds the substrates ammonia (free or transferred from glutamine from the small subunit), hydrogencarbonate and ATP and carries out an ATP-coupled ligase reaction, activating hydrogencarbonate by forming carboxy phosphate which reacts with ammonia to form carbamoyl phosphate. This Rubrobacter xylanophilus (strain DSM 9941 / JCM 11954 / NBRC 16129 / PRD-1) protein is Carbamoyl phosphate synthase large chain.